The sequence spans 450 residues: Cytidylate cyclase (450 aa).

A Guanylate cyclase domain is found at 97–236 (VTMFVDIRKS…LPVDMTAKLQ (140 aa)). An a ribonucleoside 5'-triphosphate-binding site is contributed by Phe100. Mn(2+) contacts are provided by Asp102, Ile103, and Asp146. Residues 318–450 (PNQFNFECFV…YRNIIGVYIK (133 aa)) form an AGS-C domain region.

It belongs to the adenylyl cyclase class-4/guanylyl cyclase family. Pyrimidine cyclase subfamily. As to quaternary structure, homodimer. Mn(2+) serves as cofactor.

It is found in the cytoplasm. The enzyme catalyses CTP = 3',5'-cyclic CMP + diphosphate. With respect to regulation, in E.coli strain MG1655 transformed with both genes cCMP appears between 15 and 30 minutes after infection with phage T5 (at protein level). No cCMP accumulates in uninfected cells. Functionally, pycsar (pyrimidine cyclase system for antiphage resistance) provides immunity against bacteriophage. The pyrimidine cyclase (PycC) synthesizes cyclic nucleotides in response to infection; these serve as specific second messenger signals. The signal activates the adjacent effector, leading to bacterial cell death and abortive phage infection. A clade E Pycsar system. Its function is as follows. The pyrimidine cyclase gene of a two-gene Pycsar system, generates cyclic CMP (cCMP) from CTP in response to bacteriophage infection. Has little to no activity on ATP, GTP or UTP. Expression of this and adjacent effector EcPycTM (AC P0DV25) confers resistance to bacteriophage P1 and T5; expression of this gene alone does not confer resistance. When cells expressing the Pycsar system are infected by phage T5 at low multiplicity of infection (0.2 MOI) the culture survives, at 2.0 MOI bacteria enter growth arrest. The same cells enter growth arrest after exposure to 250 uM cCMP but not cUMP; thus the effector protein responds only to the cNMP produced by its cognate NTP cyclase. Some of the cells treated with cCMP have abnormal membrane protrusions. The protein is Cytidylate cyclase of Escherichia coli.